The following is a 235-amino-acid chain: REF/SRPP-like protein At2g47780 (235 aa).

Residues 1 to 12 (MAEDEIVVEEEQ) show a composition bias toward acidic residues. A disordered region spans residues 1-32 (MAEDEIVVEEEQSQPQEITPVPPSSSSSPSLV).

This sequence belongs to the REF/SRPP family.

The chain is REF/SRPP-like protein At2g47780 from Arabidopsis thaliana (Mouse-ear cress).